Reading from the N-terminus, the 503-residue chain is Cobyric acid synthase (503 aa).

The GATase cobBQ-type domain occupies 255-444 (DIDIAVIRYP…FHDLFHNDAF (190 aa)). Cysteine 337 acts as the Nucleophile in catalysis. Histidine 436 is an active-site residue.

It belongs to the CobB/CobQ family. CobQ subfamily.

Its pathway is cofactor biosynthesis; adenosylcobalamin biosynthesis. In terms of biological role, catalyzes amidations at positions B, D, E, and G on adenosylcobyrinic A,C-diamide. NH(2) groups are provided by glutamine, and one molecule of ATP is hydrogenolyzed for each amidation. In Geobacillus sp. (strain WCH70), this protein is Cobyric acid synthase.